Here is a 298-residue protein sequence, read N- to C-terminus: MNQEVKSGKILSPSTPWTERQVPGIQVANEQQSLKATSTEPTIECPECHALVTRTAIAFNAYVCPSCDEHLRMKARDRLTWFFDQVDAELGQEFSAKDPLKFVDSKPYPERMREAQSKTGETEALVVMQGTLNNVSMIACAFEFDFMGGSMGTVVGDRFVQAAERAIEQKQALICFAASGGARMQEGMLSLMQMARTSAAIQRMKDAGLPYIVVLTHPVYGGVTASLAMLGDVHIAEPKAMIGFAGKRVIEQTVRETLEEPFQRAEYLLDHGVVDQIVHRHALRDTVSRIVSKLMNLP.

The CoA carboxyltransferase N-terminal domain occupies 41–298; the sequence is PTIECPECHA…RIVSKLMNLP (258 aa). The Zn(2+) site is built by Cys45, Cys48, Cys64, and Cys67. The C4-type zinc finger occupies 45–67; that stretch reads CPECHALVTRTAIAFNAYVCPSC.

The protein belongs to the AccD/PCCB family. In terms of assembly, acetyl-CoA carboxylase is a heterohexamer composed of biotin carboxyl carrier protein (AccB), biotin carboxylase (AccC) and two subunits each of ACCase subunit alpha (AccA) and ACCase subunit beta (AccD). It depends on Zn(2+) as a cofactor.

It is found in the cytoplasm. The catalysed reaction is N(6)-carboxybiotinyl-L-lysyl-[protein] + acetyl-CoA = N(6)-biotinyl-L-lysyl-[protein] + malonyl-CoA. It participates in lipid metabolism; malonyl-CoA biosynthesis; malonyl-CoA from acetyl-CoA: step 1/1. Functionally, component of the acetyl coenzyme A carboxylase (ACC) complex. Biotin carboxylase (BC) catalyzes the carboxylation of biotin on its carrier protein (BCCP) and then the CO(2) group is transferred by the transcarboxylase to acetyl-CoA to form malonyl-CoA. This chain is Acetyl-coenzyme A carboxylase carboxyl transferase subunit beta, found in Acinetobacter baylyi (strain ATCC 33305 / BD413 / ADP1).